We begin with the raw amino-acid sequence, 169 residues long: Ribosome maturation factor RimM (169 aa).

The PRC barrel domain maps to 94-168 (DDEFYHADLI…RIVADPPEGL (75 aa)).

Belongs to the RimM family. Binds ribosomal protein uS19.

Its subcellular location is the cytoplasm. Functionally, an accessory protein needed during the final step in the assembly of 30S ribosomal subunit, possibly for assembly of the head region. Essential for efficient processing of 16S rRNA. May be needed both before and after RbfA during the maturation of 16S rRNA. It has affinity for free ribosomal 30S subunits but not for 70S ribosomes. The polypeptide is Ribosome maturation factor RimM (Cereibacter sphaeroides (strain ATCC 17025 / ATH 2.4.3) (Rhodobacter sphaeroides)).